We begin with the raw amino-acid sequence, 163 residues long: Putative 4-hydroxy-4-methyl-2-oxoglutarate aldolase (163 aa).

Substrate-binding positions include 76 to 79 and R98; that span reads GDMI. A divalent metal cation is bound at residue D99.

It belongs to the class II aldolase/RraA-like family. As to quaternary structure, homotrimer. A divalent metal cation is required as a cofactor.

It carries out the reaction 4-hydroxy-4-methyl-2-oxoglutarate = 2 pyruvate. The enzyme catalyses oxaloacetate + H(+) = pyruvate + CO2. In terms of biological role, catalyzes the aldol cleavage of 4-hydroxy-4-methyl-2-oxoglutarate (HMG) into 2 molecules of pyruvate. Also contains a secondary oxaloacetate (OAA) decarboxylase activity due to the common pyruvate enolate transition state formed following C-C bond cleavage in the retro-aldol and decarboxylation reactions. The sequence is that of Putative 4-hydroxy-4-methyl-2-oxoglutarate aldolase from Pseudomonas fluorescens (strain Pf0-1).